The primary structure comprises 79 residues: MASSRFQLVALLVVFSLVISITANSVEKDVMDGPCRLRGTCNNDGDCDKHCHRSTDAAAMDGHCLFDKPTGPVCCCLFD.

Positions 1–23 (MASSRFQLVALLVVFSLVISITA) are cleaved as a signal peptide. Cystine bridges form between Cys-35–Cys-76, Cys-41–Cys-64, Cys-47–Cys-74, and Cys-51–Cys-75.

It belongs to the DEFL family.

Its subcellular location is the secreted. This Arabidopsis thaliana (Mouse-ear cress) protein is Putative defensin-like protein 274.